Consider the following 585-residue polypeptide: FAD-linked oxidoreductase apf9 (585 aa).

The signal sequence occupies residues Met-1 to Ala-19. Residues Asn-40, Asn-92, and Asn-117 are each glycosylated (N-linked (GlcNAc...) asparagine). The FAD-binding PCMH-type domain occupies Ile-108 to Thr-294. The residue at position 145 (His-145) is a Pros-8alpha-FAD histidine. Residues Asn-352, Asn-412, and Asn-495 are each glycosylated (N-linked (GlcNAc...) asparagine).

This sequence belongs to the oxygen-dependent FAD-linked oxidoreductase family. FAD is required as a cofactor.

The protein operates within secondary metabolite biosynthesis. Functionally, FAD-linked oxidoreductase; part of the gene cluster that mediates the biosynthesis of the cyclic tetrapeptide apicidin F (APF). The non-ribosomal peptide synthetase apf1 incorporates four different amino acids to produce apicidin F: L-phenylalanine, D-pipecolic acid (D-pip), N-methoxy-L-tryptophan and L-2-aminooctanedioic acid. L-Phenylalanine is the only proteinogenic amino acid directly used by apf1. The 3 other apf1 substrates are non-proteinogenic and have to be modified by other enzymes of the cluster. Lysine is converted to delta-1-pyrroline-5-carboxylate (P5C) which is reduced to L-pipecolic acid (L-pip) by apf3. L-pip is epimerized to D-pip, probably by apf1 activity, prior to incorporation. L-Tryptophan is N-oxidyzed by one of the cytochrome P450 monooxygenases (apf7 or apf8), and further methylated at the hydroxy group by the O-methyltransferase apf6 to yield N-methoxy-L-tryptophan. The synthesis of the fourth apf1 substrate is more complex. The fatty acid synthase apf5 is involved in the synthesis of the octanoic acid backbone of L-2-aminooctanedioic acid by fixing one acetyl-CoA unit and three malonyl-CoA units. Then one of the cytochrome P450 monooxygenases (apf7 or apf8) may oxidize this backbone to 2-oxooctanoic acid. The aminotransferase apf4 is predicted to catalyze the exchange of the keto group with an amino group. The next step would be the oxidation of 2-aminooctanoic acid by one of the cytochrome P450 monooxygenases (apf7 or apf8). The last step is the oxidation of 2-amino-8-hydroxyoctanoic acid to 2-aminooctanedioic acid is catalyzed by the FAD-dependent monooxygenase apf9. The sequence is that of FAD-linked oxidoreductase apf9 from Gibberella fujikuroi (strain CBS 195.34 / IMI 58289 / NRRL A-6831) (Bakanae and foot rot disease fungus).